The following is a 75-amino-acid chain: Small ribosomal subunit protein bS18c (75 aa).

This sequence belongs to the bacterial ribosomal protein bS18 family. In terms of assembly, part of the 30S ribosomal subunit.

The protein resides in the plastid. Its subcellular location is the chloroplast. This chain is Small ribosomal subunit protein bS18c, found in Adiantum capillus-veneris (Maidenhair fern).